The chain runs to 431 residues: MVSLEKNDRVMLARQLPLKSVALILAGGRGTRLKDLTNKRAKPAVHFGGKFRIIDFALSNCLNSGIRRIGVITQYQSHTLVQHIQRGWSLFSEEMNEFVDLLPAQQRMKGENWYRGTADAVTQNLDIIRRYKAEYVVILAGDHIYKQDYSRMLIDHVEKGARCTVACMPVPIKEATAFGVMAVDESDKIIDFVEKPANPPAMPGDASKSLASMGIYVFDADYLYELLAADDKDDASSHDFGKDIIPKITREGMAYAHPFPLSCVQSDPQAEPYWRDVGTLEAYWKANLDLASVTPELDMYDQNWPIRTHMESLPPAKFVQDRSGSHGMTLNSLVSGGCIISGSVVVQSVLFPRVRINSFCNIDSAVLLPEVWVGRSCRLRRCVIDRACIIPEGMVIGENAEEDARRFYRSEEGIVLVTREMLRKLQVKQER.

Residue lysine 39 coordinates beta-D-fructose 1,6-bisphosphate. AMP-binding residues include arginine 40, histidine 46, and arginine 52. Tyrosine 114 is a binding site for alpha-D-glucose 1-phosphate. Arginine 130 contacts AMP. Alpha-D-glucose 1-phosphate is bound by residues glycine 179, glutamate 194 to lysine 195, and serine 212. AMP contacts are provided by glutamate 370 and arginine 386. Residues arginine 419–arginine 423 and glutamine 429–arginine 431 contribute to the beta-D-fructose 1,6-bisphosphate site.

The protein belongs to the bacterial/plant glucose-1-phosphate adenylyltransferase family. In terms of assembly, homotetramer.

The catalysed reaction is alpha-D-glucose 1-phosphate + ATP + H(+) = ADP-alpha-D-glucose + diphosphate. It participates in glycan biosynthesis; glycogen biosynthesis. With respect to regulation, allosterically activated by fructose-1,6-bisphosphate (F16BP) and inhibited by AMP. Involved in the biosynthesis of ADP-glucose, a building block required for the elongation reactions to produce glycogen. Catalyzes the reaction between ATP and alpha-D-glucose 1-phosphate (G1P) to produce pyrophosphate and ADP-Glc. In Salmonella paratyphi A (strain ATCC 9150 / SARB42), this protein is Glucose-1-phosphate adenylyltransferase.